A 472-amino-acid polypeptide reads, in one-letter code: UDP-N-acetylmuramate--L-alanine ligase (472 aa).

118 to 124 (GTHGKTT) is a binding site for ATP.

Belongs to the MurCDEF family.

The protein localises to the cytoplasm. The enzyme catalyses UDP-N-acetyl-alpha-D-muramate + L-alanine + ATP = UDP-N-acetyl-alpha-D-muramoyl-L-alanine + ADP + phosphate + H(+). It functions in the pathway cell wall biogenesis; peptidoglycan biosynthesis. Cell wall formation. The polypeptide is UDP-N-acetylmuramate--L-alanine ligase (Methylococcus capsulatus (strain ATCC 33009 / NCIMB 11132 / Bath)).